Consider the following 204-residue polypeptide: Pro-glucagon (204 aa).

An N-terminal signal peptide occupies residues 1 to 20 (MTSMYFVAGLLLMIVQGSWQ). The propeptide occupies 84–109 (SGQQGVEEREKENLLDQLSSNGLARH). At R145 the chain carries Arginine amide. 2 propeptides span residues 149-161 (DFLE…DDIG) and 197-204 (RDLLGEYQ).

This sequence belongs to the glucagon family. As to expression, isoform LPII is expressed in both pancreas and intestine. Expression of isoform LPI is restricted to the pancreas. Neither isoform is detected in salivary glands.

It localises to the secreted. Its function is as follows. Plays a key role in glucose metabolism and homeostasis. Regulates blood glucose by increasing gluconeogenesis and decreasing glycolysis. Functionally, potent stimulator of glucose-dependent insulin release. Plays important roles on gastric motility and the suppression of plasma glucagon levels. Stimulates intestinal growth and up-regulates villus height in the small intestine, concomitant with increased crypt cell proliferation and decreased enterocyte apoptosis. The protein is Pro-glucagon (GCG) of Heloderma suspectum (Gila monster).